The following is a 917-amino-acid chain: MATNFLTKIFGSRNDRLLKQYRKTVVHINALEPEYEQMSHEQLRAKTQEFKERVARGESLESILPAAFALVREGSKRIMKMRHFDVQLLGGMALHFGKIAEMRTGEGKTLTATLPVYLNALSGKGVHVVTVNDYLAHRDAQWMGRLYNFLGLTVGINLPNMPRAEKQAAYRADITYGTNNEYGFDYLRDNMVYEAQDRVQQGLNYAIVDEVDSILIDEARTPLIISGQAEDHQALYVTMNQLVPQLVRQEGEADLRTGEGVTRLGDFTLDEKSHQVFLTEQGHETAERIFASHGLIAEGASVYDPANIALMHHLYAALRARHLYHRDQHYVVQNDEIVIVDEFTGRLMSGRRWSEGLHQAVEAKEGVTIQAENQTLASITFQNYFRLYHKLAGMTGTADTEAYEFQEIYGLETMVIPPNRPSRRNDQLDLVYKTTREKYAAAVMDIRACHERGQPVLVGTTSIENSEIIDQLLSQEGLPHQVLNAKQHAREADIVAQAGRAGMITIATNMAGRGTDIVLGGNVEKDVAAIEADTALSEAERAARISALRAQWQIEHEKVKALGGLRIIATERHESRRIDNQLRGRSGRQGDPGSSRFYLGLDDALMRIFAGERVKAIMDRLKMPDGEAIEAGIVTRSIESAQRKVEARNFDIRKQLLEYDDVANDQRKVIYQQRNEILDASDLSDLIAAMREDCMTDLVRQYVPAESMEEQWDLPTLEKRLASEWQLTMALQELVQGANAITDDEILDRVRQAAKAAFDAKVEQVGRENFTQFERMVLLQNFDTQWRDHLSALDYLRQGIHLRGYAQKQPKQEYKREAFELFRQLIDRVKNEVTKLLMTVQVQSPTQLEQAAQDMESRAESIANVTYTAPTDTGQVEATLAAQMAERPLPQGMRVGRNDRCPCGSGKKYKHCHGKLA.

ATP contacts are provided by residues Gln-87, 105 to 109 (GEGKT), and Asp-516. Zn(2+)-binding residues include Cys-901, Cys-903, Cys-912, and His-913.

This sequence belongs to the SecA family. As to quaternary structure, monomer and homodimer. Part of the essential Sec protein translocation apparatus which comprises SecA, SecYEG and auxiliary proteins SecDF-YajC and YidC. Zn(2+) serves as cofactor.

It is found in the cell inner membrane. The protein resides in the cytoplasm. It catalyses the reaction ATP + H2O + cellular proteinSide 1 = ADP + phosphate + cellular proteinSide 2.. Functionally, part of the Sec protein translocase complex. Interacts with the SecYEG preprotein conducting channel. Has a central role in coupling the hydrolysis of ATP to the transfer of proteins into and across the cell membrane, serving both as a receptor for the preprotein-SecB complex and as an ATP-driven molecular motor driving the stepwise translocation of polypeptide chains across the membrane. This Verminephrobacter eiseniae (strain EF01-2) protein is Protein translocase subunit SecA.